The following is a 360-amino-acid chain: Phospho-N-acetylmuramoyl-pentapeptide-transferase (360 aa).

10 helical membrane-spanning segments follow: residues Y21–G41, M74–G94, Y97–Y117, L135–A155, V168–S188, G199–S219, A236–F256, V263–L283, I288–V308, and V338–K358.

The protein belongs to the glycosyltransferase 4 family. MraY subfamily. Requires Mg(2+) as cofactor.

It localises to the cell inner membrane. The enzyme catalyses UDP-N-acetyl-alpha-D-muramoyl-L-alanyl-gamma-D-glutamyl-meso-2,6-diaminopimeloyl-D-alanyl-D-alanine + di-trans,octa-cis-undecaprenyl phosphate = di-trans,octa-cis-undecaprenyl diphospho-N-acetyl-alpha-D-muramoyl-L-alanyl-D-glutamyl-meso-2,6-diaminopimeloyl-D-alanyl-D-alanine + UMP. It participates in cell wall biogenesis; peptidoglycan biosynthesis. Functionally, catalyzes the initial step of the lipid cycle reactions in the biosynthesis of the cell wall peptidoglycan: transfers peptidoglycan precursor phospho-MurNAc-pentapeptide from UDP-MurNAc-pentapeptide onto the lipid carrier undecaprenyl phosphate, yielding undecaprenyl-pyrophosphoryl-MurNAc-pentapeptide, known as lipid I. The polypeptide is Phospho-N-acetylmuramoyl-pentapeptide-transferase (Shewanella piezotolerans (strain WP3 / JCM 13877)).